A 284-amino-acid polypeptide reads, in one-letter code: Protein SCO1 homolog, mitochondrial (284 aa).

Residues 46–73 (RAFSAGPPPPGAGPEPKGGQAGSHRPKP) form a disordered region. A helical transmembrane segment spans residues 81 to 98 (LALTFAIGGSLLAGMKYF). At 99 to 284 (KKEKIEKLEK…AHMRSHMKKR (186 aa)) the chain is on the mitochondrial intermembrane side. The interval 101-114 (EKIEKLEKQRHRSI) is important for dimerization. Cu cation-binding residues include cysteine 152, cysteine 156, and histidine 243. A disulfide bridge connects residues cysteine 152 and cysteine 156.

The protein belongs to the SCO1/2 family. Homodimer. Interacts with COA6. Found in a complex with TMEM177, COX20, COA6, MT-CO2/COX2, COX18 and SCO2. Interacts with TMEM177 in a COX20-dependent manner. Interacts with COX20 in a MT-CO2/COX2- and COX18-dependent manner. Interacts with COX16.

The protein localises to the mitochondrion. It localises to the mitochondrion inner membrane. Copper metallochaperone essential for the maturation of cytochrome c oxidase subunit II (MT-CO2/COX2). Not required for the synthesis of MT-CO2/COX2 but plays a crucial role in stabilizing MT-CO2/COX2 during its subsequent maturation. Involved in transporting copper to the Cu(A) site on MT-CO2/COX2. Plays an important role in the regulation of copper homeostasis by controlling the abundance and cell membrane localization of copper transporter CTR1. The polypeptide is Protein SCO1 homolog, mitochondrial (Sco1) (Mus musculus (Mouse)).